Here is a 206-residue protein sequence, read N- to C-terminus: MLPCAAGARGRGAMVVLRAGKKTFLPPLCRAFACRGCQLAPERGAERRDTAPSGVSRFCPPRKSCHDWIGPPDKYSNLRPVHFYIPENESPLEQKLRKLRQETQEWNQQFWANQNLTFSKEKEEFIHSRLKTKGLGLRTESGQKATLNAEEMADFYKEFLSKNFQKHMYYNRDWYKRNFAITFFMGKVALERIWNKLKQKQKKRSN.

A mitochondrion-targeting transit peptide spans 1-39; it reads MLPCAAGARGRGAMVVLRAGKKTFLPPLCRAFACRGCQL.

It belongs to the COA8 family. Post-translationally, N-terminal mitochondrial targeting sequence is cleaved from the mature protein once in the mitochondrion. In normal conditions, the cytoplasmic precursor protein is rapidly degraded by the ubiquitination-proteasome system (UPS). Oxidative stress induces protein stabilization and import into mitochondria where it protects COX from degradation. Expressed in fibroblasts.

The protein localises to the mitochondrion inner membrane. Functionally, required for cytochrome c complex (COX) IV assembly and function Protects COX assembly from oxidation-induced degradation, COX being the terminal component of the mitochondrial respiratory chain. This Homo sapiens (Human) protein is Cytochrome c oxidase assembly factor 8.